The primary structure comprises 725 residues: Catalase-peroxidase (725 aa).

Residues 88-211 (WHSAGTYRIQ…LAASEMGLIY (124 aa)) constitute a cross-link (tryptophyl-tyrosyl-methioninium (Trp-Tyr) (with M-237)). Catalysis depends on H89, which acts as the Proton acceptor. A cross-link (tryptophyl-tyrosyl-methioninium (Tyr-Met) (with W-88)) is located at residues 211–237 (YVNPEGPGREPDPLKAAQQIRETFKRM). Heme b is bound at residue H252.

This sequence belongs to the peroxidase family. Peroxidase/catalase subfamily. Homodimer or homotetramer. Requires heme b as cofactor. Post-translationally, formation of the three residue Trp-Tyr-Met cross-link is important for the catalase, but not the peroxidase activity of the enzyme.

The enzyme catalyses H2O2 + AH2 = A + 2 H2O. The catalysed reaction is 2 H2O2 = O2 + 2 H2O. Its function is as follows. Bifunctional enzyme with both catalase and broad-spectrum peroxidase activity. The sequence is that of Catalase-peroxidase from Symbiobacterium thermophilum (strain DSM 24528 / JCM 14929 / IAM 14863 / T).